We begin with the raw amino-acid sequence, 353 residues long: Photosystem II D2 protein (353 aa).

An N-acetylthreonine modification is found at Thr-2. Position 2 is a phosphothreonine (Thr-2). Residues 41 to 61 traverse the membrane as a helical segment; it reads CAYFALGGWFTGTTFVTSWYT. His-118 is a chlorophyll a binding site. The chain crosses the membrane as a helical span at residues 125-141; the sequence is GFMLRQFELARSVQLRP. Pheophytin a-binding residues include Gln-130 and Asn-143. Residues 153–166 traverse the membrane as a helical segment; it reads VFVSVFLIYPLGQS. His-198 provides a ligand contact to chlorophyll a. Residues 208–228 form a helical membrane-spanning segment; sequence AALLCAIHGATVENTLFEDGD. The a plastoquinone site is built by His-215 and Phe-262. Residue His-215 coordinates Fe cation. His-269 provides a ligand contact to Fe cation. The helical transmembrane segment at 279–295 threads the bilayer; it reads GLWMSAIGVVGLALNLR.

Belongs to the reaction center PufL/M/PsbA/D family. PSII is composed of 1 copy each of membrane proteins PsbA, PsbB, PsbC, PsbD, PsbE, PsbF, PsbH, PsbI, PsbJ, PsbK, PsbL, PsbM, PsbT, PsbX, PsbY, PsbZ, Psb30/Ycf12, at least 3 peripheral proteins of the oxygen-evolving complex and a large number of cofactors. It forms dimeric complexes. Requires The D1/D2 heterodimer binds P680, chlorophylls that are the primary electron donor of PSII, and subsequent electron acceptors. It shares a non-heme iron and each subunit binds pheophytin, quinone, additional chlorophylls, carotenoids and lipids. There is also a Cl(-1) ion associated with D1 and D2, which is required for oxygen evolution. The PSII complex binds additional chlorophylls, carotenoids and specific lipids. as cofactor.

The protein resides in the plastid. Its subcellular location is the chloroplast thylakoid membrane. The catalysed reaction is 2 a plastoquinone + 4 hnu + 2 H2O = 2 a plastoquinol + O2. In terms of biological role, photosystem II (PSII) is a light-driven water:plastoquinone oxidoreductase that uses light energy to abstract electrons from H(2)O, generating O(2) and a proton gradient subsequently used for ATP formation. It consists of a core antenna complex that captures photons, and an electron transfer chain that converts photonic excitation into a charge separation. The D1/D2 (PsbA/PsbD) reaction center heterodimer binds P680, the primary electron donor of PSII as well as several subsequent electron acceptors. D2 is needed for assembly of a stable PSII complex. The sequence is that of Photosystem II D2 protein from Liriodendron tulipifera (Tuliptree).